Consider the following 255-residue polypeptide: Leucyl/phenylalanyl-tRNA--protein transferase (255 aa).

The protein belongs to the L/F-transferase family.

The protein resides in the cytoplasm. It catalyses the reaction N-terminal L-lysyl-[protein] + L-leucyl-tRNA(Leu) = N-terminal L-leucyl-L-lysyl-[protein] + tRNA(Leu) + H(+). The enzyme catalyses N-terminal L-arginyl-[protein] + L-leucyl-tRNA(Leu) = N-terminal L-leucyl-L-arginyl-[protein] + tRNA(Leu) + H(+). It carries out the reaction L-phenylalanyl-tRNA(Phe) + an N-terminal L-alpha-aminoacyl-[protein] = an N-terminal L-phenylalanyl-L-alpha-aminoacyl-[protein] + tRNA(Phe). Functionally, functions in the N-end rule pathway of protein degradation where it conjugates Leu, Phe and, less efficiently, Met from aminoacyl-tRNAs to the N-termini of proteins containing an N-terminal arginine or lysine. The chain is Leucyl/phenylalanyl-tRNA--protein transferase from Burkholderia pseudomallei (strain 668).